The primary structure comprises 121 residues: DNA-directed RNA polymerase subunit omega (121 aa).

Belongs to the RNA polymerase subunit omega family. As to quaternary structure, the RNAP catalytic core consists of 2 alpha, 1 beta, 1 beta' and 1 omega subunit. When a sigma factor is associated with the core the holoenzyme is formed, which can initiate transcription.

It carries out the reaction RNA(n) + a ribonucleoside 5'-triphosphate = RNA(n+1) + diphosphate. Promotes RNA polymerase assembly. Latches the N- and C-terminal regions of the beta' subunit thereby facilitating its interaction with the beta and alpha subunits. The protein is DNA-directed RNA polymerase subunit omega of Syntrophobacter fumaroxidans (strain DSM 10017 / MPOB).